The sequence spans 158 residues: Transcription elongation factor GreA (158 aa).

Residues A47–D74 adopt a coiled-coil conformation.

The protein belongs to the GreA/GreB family.

Necessary for efficient RNA polymerase transcription elongation past template-encoded arresting sites. The arresting sites in DNA have the property of trapping a certain fraction of elongating RNA polymerases that pass through, resulting in locked ternary complexes. Cleavage of the nascent transcript by cleavage factors such as GreA or GreB allows the resumption of elongation from the new 3'terminus. GreA releases sequences of 2 to 3 nucleotides. This chain is Transcription elongation factor GreA, found in Bradyrhizobium sp. (strain BTAi1 / ATCC BAA-1182).